The sequence spans 92 residues: MARVTVEDAVDQIGNRFDMILVAARRARQIAVQGKDPMVDEMNDKPTVIALREIELGLVNATTLDADERQTVRDREAAEVAAVSAIAEGRTL.

The protein belongs to the RNA polymerase subunit omega family. The RNAP catalytic core consists of 2 alpha, 1 beta, 1 beta' and 1 omega subunit. When a sigma factor is associated with the core the holoenzyme is formed, which can initiate transcription.

The enzyme catalyses RNA(n) + a ribonucleoside 5'-triphosphate = RNA(n+1) + diphosphate. Promotes RNA polymerase assembly. Latches the N- and C-terminal regions of the beta' subunit thereby facilitating its interaction with the beta and alpha subunits. In Shewanella denitrificans (strain OS217 / ATCC BAA-1090 / DSM 15013), this protein is DNA-directed RNA polymerase subunit omega.